Reading from the N-terminus, the 761-residue chain is Coenzyme PQQ synthesis protein F (761 aa).

H49 serves as a coordination point for Zn(2+). The Proton acceptor role is filled by E52. Zn(2+) contacts are provided by H53 and E130.

It belongs to the peptidase M16 family. The cofactor is Zn(2+).

It functions in the pathway cofactor biosynthesis; pyrroloquinoline quinone biosynthesis. Functionally, required for coenzyme pyrroloquinoline quinone (PQQ) biosynthesis. It is thought that this protein is a protease that cleaves peptides bond in a small peptide (gene pqqA), providing the glutamate and tyrosine residues which are necessary for the synthesis of PQQ. In Klebsiella pneumoniae, this protein is Coenzyme PQQ synthesis protein F (pqqF).